A 398-amino-acid chain; its full sequence is Phosphoglycerate kinase (398 aa).

Substrate is bound by residues 21 to 23 (DFN), Arg36, 59 to 62 (HLGR), Arg119, and Arg157. ATP is bound by residues Lys208, Gly296, Glu327, and 354 to 357 (GGDS).

This sequence belongs to the phosphoglycerate kinase family. Monomer.

The protein localises to the cytoplasm. It carries out the reaction (2R)-3-phosphoglycerate + ATP = (2R)-3-phospho-glyceroyl phosphate + ADP. It participates in carbohydrate degradation; glycolysis; pyruvate from D-glyceraldehyde 3-phosphate: step 2/5. The sequence is that of Phosphoglycerate kinase from Streptococcus equi subsp. equi (strain 4047).